Here is a 337-residue protein sequence, read N- to C-terminus: Cell-surface associated glycoprotein DFI1 (337 aa).

The Cytoplasmic segment spans residues 1 to 21 (MEKLSINNNNNNRRYQSRRFD). Residues 22–42 (GITIIRIVVLVFIVTVSTYFV) form a helical membrane-spanning segment. The Extracellular segment spans residues 43–269 (NSYTCNQPHH…NGGGLSHTNR (227 aa)). N-linked (GlcNAc...) asparagine glycans are attached at residues N53, N65, N87, and N100. Composition is skewed to low complexity over residues 124-220 (SSTF…TSAS) and 241-259 (SVIS…KNND). Disordered stretches follow at residues 124–224 (SSTF…QHVT) and 241–265 (SVIS…GGLS). A helical transmembrane segment spans residues 270 to 290 (IVVGVVVGVGGSILIGLLAVL). The Glycophorin A signature appears at 273-277 (GVVVG). Residues 291-337 (FYLRKRNNRDYEGGWTFWRKNEKLGSDEFFNGELGVRDRNINQGSNF) lie on the Cytoplasmic side of the membrane. Positions 301–314 (YEGGWTFWRKNEKL) match the Calmodulin-binding motif.

Belongs to the MID2 like cell wall stress sensor family. In terms of processing, cross-linked to the carbohydrate polymers of the cell wall. O-glycosylated by MNT1 and MNT2. Also N-glycosylated.

It is found in the cell membrane. Its subcellular location is the cell septum. It localises to the secreted. The protein localises to the cell wall. In terms of biological role, cell-surface associated glycoprotein that acts as a plasma membrane receptor-type protein which senses the presence of matrix. Binds to calmodulin in response to environmental conditions and initiates a signaling cascade that activates CEK1, thus promoting invasive filamentation. Involved in the maintenance of the cell wall. The sequence is that of Cell-surface associated glycoprotein DFI1 from Candida albicans (strain SC5314 / ATCC MYA-2876) (Yeast).